We begin with the raw amino-acid sequence, 879 residues long: Band 4.1-like protein 1 (879 aa).

The segment at 1-64 (MTTETGPDSE…RPAEQSLDME (64 aa)) is disordered. Residues 17–35 (ETPQQPEAAAAVTTPVTPA) show a composition bias toward low complexity. Residue Thr-30 is modified to Phosphothreonine. Basic and acidic residues predominate over residues 38 to 50 (SHPETNSNEKHLT). Ser-75 carries the post-translational modification Phosphoserine. Thr-79 carries the post-translational modification Phosphothreonine. The FERM domain occupies 97–378 (ATCRVTLLDA…EHHTFFRLVS (282 aa)). Tyr-343 is modified (phosphotyrosine). A phosphoserine mark is found at Ser-378, Ser-430, Ser-437, Ser-461, and Ser-466. A disordered region spans residues 428 to 501 (SRSLDGAEFS…HKQEFLDKPE (74 aa)). Over residues 444 to 501 (ENHDAGPDGDKREDDAESGGRRSEAEEGEVRTPTKIKELKPEQETTPRHKQEFLDKPE) the composition is skewed to basic and acidic residues. A Phosphothreonine modification is found at Thr-475. Residues 483-541 (KPEQETTPRHKQEFLDKPEDVLLKHQASINELKRTLKEPNSKLIHRDRDWERERRLPSS) are spectrin--actin-binding. At Ser-510 the chain carries Phosphoserine. A compositionally biased stretch (basic and acidic residues) spans 514 to 538 (LKRTLKEPNSKLIHRDRDWERERRL). Disordered stretches follow at residues 514–596 (LKRT…FLKD), 633–687 (FEDF…STPE), and 718–742 (SRVSTADSTQVDGGAPAAKDFMTTP). Ser-540, Ser-541, Ser-544, and Ser-546 each carry phosphoserine. Position 550 is a phosphothreonine (Thr-550). Residues 550–577 (TPEKASERAGLREGSEEKVKPPRPRAPE) are compositionally biased toward basic and acidic residues. A phosphoserine mark is found at Ser-564 and Ser-578. Thr-580 bears the Phosphothreonine mark. Residues Glu-583, Gln-587, Ser-639, Ser-648, Ser-650, Ser-665, Ser-666, Asp-669, Ser-671, Ser-677, and Ser-684 each carry the phosphoserine modification. The segment covering 635–650 (DFSRSLPELDRDKSDS) has biased composition (basic and acidic residues). Thr-685 carries the phosphothreonine modification. The segment covering 718–728 (SRVSTADSTQV) has biased composition (polar residues). Ser-721, Pro-742, Ala-766, Ser-782, and Ser-868 each carry phosphoserine. Residues 744-879 (CITTETISTT…EERDKKPQES (136 aa)) are C-terminal (CTD).

As to quaternary structure, interacts with AGAP2. As to expression, highest expression in brain, lower in heart and kidney. Within the brain, highest expression in cerebellum.

The protein resides in the cytoplasm. It localises to the cytoskeleton. May function to confer stability and plasticity to neuronal membrane via multiple interactions, including the spectrin-actin-based cytoskeleton, integral membrane channels and membrane-associated guanylate kinases. This is Band 4.1-like protein 1 from Rattus norvegicus (Rat).